The chain runs to 129 residues: Cuticle protein 12.5 (129 aa).

A run of 10 repeats spans residues 7-10 (AAPA), 15-18 (AAPA), 23-26 (AAPA), 28-31 (AAPV), 37-40 (AAPA), 67-70 (AAPA), 79-82 (AAPA), 91-94 (AAPA), 103-106 (AAPA), and 117-120 (AAPA).

In terms of biological role, component of the cuticle of migratory locust which contains more than 100 different structural proteins. This is Cuticle protein 12.5 from Locusta migratoria (Migratory locust).